A 625-amino-acid polypeptide reads, in one-letter code: Putative xanthine/uracil permease C887.17 (625 aa).

A run of 10 helical transmembrane segments spans residues 49 to 69, 107 to 127, 154 to 174, 192 to 212, 246 to 263, 328 to 348, 369 to 389, 406 to 426, 429 to 449, and 465 to 485; these read AGLT…TILV, AAIS…PVGM, EALL…VIGL, AGIG…LGVI, MWVG…LMMY, FAIA…GTLY, VAYI…CSPV, GILG…APIF, IPVW…MKST, and ITIA…AGII. The disordered stretch occupies residues 595–625; that stretch reads EAVGESESFSNRQQDFRTPYAGIDMDTDDRI.

It belongs to the nucleobase:cation symporter-2 (NCS2) (TC 2.A.40) family. Azg-like subfamily.

Its subcellular location is the golgi apparatus membrane. This Schizosaccharomyces pombe (strain 972 / ATCC 24843) (Fission yeast) protein is Putative xanthine/uracil permease C887.17.